Consider the following 402-residue polypeptide: Formate-dependent phosphoribosylglycinamide formyltransferase (402 aa).

Residues 25–26 (EL) and E85 contribute to the N(1)-(5-phospho-beta-D-ribosyl)glycinamide site. Residues R118, K159, 164–169 (SSGKGQ), 199–202 (EQFV), and E207 contribute to the ATP site. In terms of domain architecture, ATP-grasp spans 123–318 (RLASEELGLP…EFELHAKAVL (196 aa)). The Mg(2+) site is built by E277 and E289. Residues D296, K365, and 372–373 (RR) each bind N(1)-(5-phospho-beta-D-ribosyl)glycinamide.

It belongs to the PurK/PurT family. As to quaternary structure, homodimer.

The enzyme catalyses N(1)-(5-phospho-beta-D-ribosyl)glycinamide + formate + ATP = N(2)-formyl-N(1)-(5-phospho-beta-D-ribosyl)glycinamide + ADP + phosphate + H(+). It functions in the pathway purine metabolism; IMP biosynthesis via de novo pathway; N(2)-formyl-N(1)-(5-phospho-D-ribosyl)glycinamide from N(1)-(5-phospho-D-ribosyl)glycinamide (formate route): step 1/1. Involved in the de novo purine biosynthesis. Catalyzes the transfer of formate to 5-phospho-ribosyl-glycinamide (GAR), producing 5-phospho-ribosyl-N-formylglycinamide (FGAR). Formate is provided by PurU via hydrolysis of 10-formyl-tetrahydrofolate. This chain is Formate-dependent phosphoribosylglycinamide formyltransferase, found in Corynebacterium efficiens (strain DSM 44549 / YS-314 / AJ 12310 / JCM 11189 / NBRC 100395).